A 205-amino-acid polypeptide reads, in one-letter code: Methylthioribulose-1-phosphate dehydratase (205 aa).

Zn(2+)-binding residues include His-94 and His-96.

It belongs to the aldolase class II family. MtnB subfamily. It depends on Zn(2+) as a cofactor.

The catalysed reaction is 5-(methylsulfanyl)-D-ribulose 1-phosphate = 5-methylsulfanyl-2,3-dioxopentyl phosphate + H2O. It functions in the pathway amino-acid biosynthesis; L-methionine biosynthesis via salvage pathway; L-methionine from S-methyl-5-thio-alpha-D-ribose 1-phosphate: step 2/6. Its function is as follows. Catalyzes the dehydration of methylthioribulose-1-phosphate (MTRu-1-P) into 2,3-diketo-5-methylthiopentyl-1-phosphate (DK-MTP-1-P). The protein is Methylthioribulose-1-phosphate dehydratase of Pectobacterium atrosepticum (strain SCRI 1043 / ATCC BAA-672) (Erwinia carotovora subsp. atroseptica).